Here is a 200-residue protein sequence, read N- to C-terminus: Guanylate kinase (200 aa).

The Guanylate kinase-like domain maps to 4–183; it reads GAVLIISGPS…AKEAMVAIAR (180 aa). An ATP-binding site is contributed by 11-18; the sequence is GPSGCGKS.

This sequence belongs to the guanylate kinase family.

The protein resides in the cytoplasm. It catalyses the reaction GMP + ATP = GDP + ADP. In terms of biological role, essential for recycling GMP and indirectly, cGMP. The chain is Guanylate kinase from Helicobacter hepaticus (strain ATCC 51449 / 3B1).